The primary structure comprises 345 residues: Trace amine-associated receptor 6 (345 aa).

Over 1–32 (MGSNSSPPAVLQLCYENVNGSCVKTPYSPGPR) the chain is Extracellular. N-linked (GlcNAc...) asparagine glycosylation occurs at asparagine 19. Disulfide bonds link cysteine 22/cysteine 186 and cysteine 105/cysteine 190. The helical transmembrane segment at 33 to 53 (VLLYAVFGFGAVLAVFGNLLV) threads the bilayer. The Cytoplasmic segment spans residues 54–68 (MISILHFKQLHSPTN). A helical membrane pass occupies residues 69-89 (FLIASLACADFWVGVSVMPFS). Topologically, residues 90-107 (MVRSIESCWYFGRSFCTF) are extracellular. A helical membrane pass occupies residues 108-128 (HTCCDVAFCYSSLFHLSFISI). The Cytoplasmic portion of the chain corresponds to 129–147 (DRYIAVTDPLVYPTKFTVS). The chain crosses the membrane as a helical span at residues 148–168 (VSGICISISWILPLAYSGAVF). The Extracellular segment spans residues 169-202 (YTGVYADGLEEVSDAVNCVGGCQVVVNQNWVLID). Residues 203 to 223 (FLSFLIPTLVMIILYGNIFLV) traverse the membrane as a helical segment. Topologically, residues 224 to 259 (ARQQAKKIETVGNKAESSSESYKARVARRERKAAKT) are cytoplasmic. The chain crosses the membrane as a helical span at residues 260-276 (LGITVVAFMISWLPYSI). At 277–282 (DSLVDA) the chain is on the extracellular side. Residues 283–302 (FMGFITPAYIYEICVWCAYY) form a helical membrane-spanning segment. At 303–345 (NSAMNPLIYALFYPWFKKAIKVIMSGQVFKNSSATMNLFSEQI) the chain is on the cytoplasmic side.

It belongs to the G-protein coupled receptor 1 family.

The protein localises to the cell membrane. Functionally, olfactory receptor specific for trace amines, such as beta-phenylethylamine (beta-PEA). Trace amine compounds are enriched in animal body fluids and act on trace amine-associated receptors (TAARs) to elicit both intraspecific and interspecific innate behaviors. Beta-PEA-binding causes a conformation change that triggers signaling via G(s)-class of G alpha proteins (GNAL or GNAS). The polypeptide is Trace amine-associated receptor 6 (Taar6) (Rattus norvegicus (Rat)).